The sequence spans 112 residues: UPF0060 membrane protein Daro_2632 (112 aa).

Transmembrane regions (helical) follow at residues 7–27 (VLGLFAITALAEIIGCYLPWL), 34–54 (PVWLLIPAAVSLGLFAWLLTL), 59–79 (AGRIYAAYGGVYVAIALIWLW), and 89–109 (WDLVGSAVSLAGMAIIMLQPA).

It belongs to the UPF0060 family.

The protein localises to the cell inner membrane. This Dechloromonas aromatica (strain RCB) protein is UPF0060 membrane protein Daro_2632.